Consider the following 473-residue polypeptide: Siroheme synthase (473 aa).

Positions 1–222 (MNTQPHHSSP…GDESRADARL (222 aa)) are precorrin-2 dehydrogenase /sirohydrochlorin ferrochelatase. Residues 37–38 (EI) and 58–59 (EK) contribute to the NAD(+) site. A uroporphyrinogen-III C-methyltransferase region spans residues 233–473 (GEVWLVGAGP…QVVRHRVVSP (241 aa)). An S-adenosyl-L-methionine-binding site is contributed by Pro242. Asp265 functions as the Proton acceptor in the catalytic mechanism. Lys287 functions as the Proton donor in the catalytic mechanism. Residues 318–320 (GGD), Ile323, 348–349 (SA), Met401, and Gly430 each bind S-adenosyl-L-methionine.

The protein in the N-terminal section; belongs to the precorrin-2 dehydrogenase / sirohydrochlorin ferrochelatase family. In the C-terminal section; belongs to the precorrin methyltransferase family.

It catalyses the reaction uroporphyrinogen III + 2 S-adenosyl-L-methionine = precorrin-2 + 2 S-adenosyl-L-homocysteine + H(+). The catalysed reaction is precorrin-2 + NAD(+) = sirohydrochlorin + NADH + 2 H(+). It carries out the reaction siroheme + 2 H(+) = sirohydrochlorin + Fe(2+). Its pathway is cofactor biosynthesis; adenosylcobalamin biosynthesis; precorrin-2 from uroporphyrinogen III: step 1/1. It functions in the pathway cofactor biosynthesis; adenosylcobalamin biosynthesis; sirohydrochlorin from precorrin-2: step 1/1. The protein operates within porphyrin-containing compound metabolism; siroheme biosynthesis; precorrin-2 from uroporphyrinogen III: step 1/1. It participates in porphyrin-containing compound metabolism; siroheme biosynthesis; siroheme from sirohydrochlorin: step 1/1. Its pathway is porphyrin-containing compound metabolism; siroheme biosynthesis; sirohydrochlorin from precorrin-2: step 1/1. In terms of biological role, multifunctional enzyme that catalyzes the SAM-dependent methylations of uroporphyrinogen III at position C-2 and C-7 to form precorrin-2 via precorrin-1. Then it catalyzes the NAD-dependent ring dehydrogenation of precorrin-2 to yield sirohydrochlorin. Finally, it catalyzes the ferrochelation of sirohydrochlorin to yield siroheme. The polypeptide is Siroheme synthase (Gluconobacter oxydans (strain 621H) (Gluconobacter suboxydans)).